Consider the following 419-residue polypeptide: Tyrosine--tRNA ligase (419 aa).

Y36 provides a ligand contact to L-tyrosine. A 'HIGH' region motif is present at residues 41 to 50 (PTGDSMHIGH). 2 residues coordinate L-tyrosine: Y168 and Q172. The 'KMSKS' region signature appears at 230–234 (KFGKT). ATP is bound at residue K233. Positions 352–419 (KNIVDFLVDA…KKKYFLARVK (68 aa)) constitute an S4 RNA-binding domain.

It belongs to the class-I aminoacyl-tRNA synthetase family. TyrS type 1 subfamily. Homodimer.

It is found in the cytoplasm. The catalysed reaction is tRNA(Tyr) + L-tyrosine + ATP = L-tyrosyl-tRNA(Tyr) + AMP + diphosphate + H(+). Functionally, catalyzes the attachment of tyrosine to tRNA(Tyr) in a two-step reaction: tyrosine is first activated by ATP to form Tyr-AMP and then transferred to the acceptor end of tRNA(Tyr). This chain is Tyrosine--tRNA ligase, found in Latilactobacillus sakei subsp. sakei (strain 23K) (Lactobacillus sakei subsp. sakei).